A 499-amino-acid polypeptide reads, in one-letter code: Glycerol kinase (499 aa).

T12 is an ADP binding site. The ATP site is built by T12, T13, and S14. T12 is a binding site for sn-glycerol 3-phosphate. Residue R16 coordinates ADP. Residues R82, E83, Y134, and D243 each coordinate sn-glycerol 3-phosphate. Glycerol-binding residues include R82, E83, Y134, D243, and Q244. T265 and G308 together coordinate ADP. Residues T265, G308, Q312, and G411 each coordinate ATP. G411 is a binding site for ADP.

It belongs to the FGGY kinase family.

The catalysed reaction is glycerol + ATP = sn-glycerol 3-phosphate + ADP + H(+). The protein operates within polyol metabolism; glycerol degradation via glycerol kinase pathway; sn-glycerol 3-phosphate from glycerol: step 1/1. With respect to regulation, inhibited by fructose 1,6-bisphosphate (FBP). Key enzyme in the regulation of glycerol uptake and metabolism. Catalyzes the phosphorylation of glycerol to yield sn-glycerol 3-phosphate. In Agrobacterium fabrum (strain C58 / ATCC 33970) (Agrobacterium tumefaciens (strain C58)), this protein is Glycerol kinase.